Here is a 439-residue protein sequence, read N- to C-terminus: MNLTPKEIVKFLDDYVIGQKKAKKIIAIALRNRYRRMQLSPELQDDIVPKNILMIGSTGVGKTEIARRLAKMMGFPFIKIEASKYTEVGFVGRDVESMVRDLANAALNLVKNEQREKNKDKIDEFIENKILEKLLPPLPKGISDEKQEEYKNSLEKMRTKLRNGNLDESTIEIEISQNMFDTNPNLPPEMGAMQDIVKVIGVGSKKVKKEMKIKDAKNALKNEAGEKILDQESIKSEALKRAENEGIIFIDEIDKIAVSSGNSNRQDPSKEGVQRDLLPIVEGSNVQTKIGTLKTDHILFIAAGAFHLSKPSDLIPELQGRFPLRVELDSLDDKALYEILTRPKNSLLKQYSQLLKTENLELEFDDEAIKEIAKIASRANEEMQDIGARRLHTVIEKLLEDLSFEADEYAGKKFVVDKKMVEEKLGDIIENKDLARYIL.

ATP contacts are provided by residues isoleucine 17, 59-64 (GVGKTE), aspartate 251, glutamate 317, and arginine 389.

The protein belongs to the ClpX chaperone family. HslU subfamily. As to quaternary structure, a double ring-shaped homohexamer of HslV is capped on each side by a ring-shaped HslU homohexamer. The assembly of the HslU/HslV complex is dependent on binding of ATP.

The protein resides in the cytoplasm. Functionally, ATPase subunit of a proteasome-like degradation complex; this subunit has chaperone activity. The binding of ATP and its subsequent hydrolysis by HslU are essential for unfolding of protein substrates subsequently hydrolyzed by HslV. HslU recognizes the N-terminal part of its protein substrates and unfolds these before they are guided to HslV for hydrolysis. In Campylobacter jejuni subsp. jejuni serotype O:23/36 (strain 81-176), this protein is ATP-dependent protease ATPase subunit HslU.